The following is a 145-amino-acid chain: Large ribosomal subunit protein uL11 (145 aa).

The protein belongs to the universal ribosomal protein uL11 family. In terms of assembly, part of the ribosomal stalk of the 50S ribosomal subunit. Interacts with L10 and the large rRNA to form the base of the stalk. L10 forms an elongated spine to which L12 dimers bind in a sequential fashion forming a multimeric L10(L12)X complex. One or more lysine residues are methylated.

Its function is as follows. Forms part of the ribosomal stalk which helps the ribosome interact with GTP-bound translation factors. In Rickettsia massiliae (strain Mtu5), this protein is Large ribosomal subunit protein uL11.